We begin with the raw amino-acid sequence, 308 residues long: Elongation factor Ts (308 aa).

The tract at residues 80-83 is involved in Mg(2+) ion dislocation from EF-Tu; that stretch reads TDFV.

Belongs to the EF-Ts family.

The protein resides in the cytoplasm. In terms of biological role, associates with the EF-Tu.GDP complex and induces the exchange of GDP to GTP. It remains bound to the aminoacyl-tRNA.EF-Tu.GTP complex up to the GTP hydrolysis stage on the ribosome. The sequence is that of Elongation factor Ts from Agrobacterium fabrum (strain C58 / ATCC 33970) (Agrobacterium tumefaciens (strain C58)).